A 122-amino-acid chain; its full sequence is Putative 2'-deoxynucleoside 5'-phosphate N-hydrolase 1 (122 aa).

Residues 4–10 (FLSGSIR), Y19, H37, E83, and 105–107 (SAM) contribute to the substrate site.

Belongs to the 2'-deoxynucleoside 5'-phosphate N-hydrolase 1 family. As to quaternary structure, monomer and homodimer.

The enzyme catalyses a pyrimidine 2'-deoxyribonucleoside 5'-phosphate + H2O = a pyrimidine nucleobase + 2-deoxy-D-ribose 5-phosphate. The catalysed reaction is a purine 2'-deoxyribonucleoside 5'-phosphate + H2O = a purine nucleobase + 2-deoxy-D-ribose 5-phosphate. Its function is as follows. Catalyzes the cleavage of the N-glycosidic bond of deoxyribonucleoside 5'-monophosphates to yield deoxyribose 5-phosphate and a purine or pyrimidine base. The chain is Putative 2'-deoxynucleoside 5'-phosphate N-hydrolase 1 from Methanococcoides burtonii (strain DSM 6242 / NBRC 107633 / OCM 468 / ACE-M).